The sequence spans 547 residues: TBCC domain-containing protein 1 (547 aa).

Residues 304–435 (PHTHRMVVMS…LEDHMAQTGL (132 aa)) enclose the C-CAP/cofactor C-like domain.

This sequence belongs to the TBCC family.

The protein localises to the cytoplasm. It localises to the cytoskeleton. Its subcellular location is the microtubule organizing center. The protein resides in the centrosome. It is found in the spindle pole. May play a role in the regulation of centrosome and Golgi apparatus positioning. This is TBCC domain-containing protein 1 (tbccd1) from Xenopus laevis (African clawed frog).